The following is a 279-amino-acid chain: Acyl-coenzyme A thioesterase MBLAC2 (279 aa).

The residue at position 2 (S2) is an N-acetylserine. Zn(2+) is bound by residues H83, H85, D87, H88, H170, D189, and H231. A lipid anchor (S-palmitoyl cysteine) is attached at C254.

Belongs to the metallo-beta-lactamase superfamily. Glyoxalase II family. Requires Zn(2+) as cofactor. In terms of processing, palmitoylated on Cys-254 by ZDHHC20.

It is found in the endoplasmic reticulum membrane. The protein resides in the cell membrane. It carries out the reaction hexadecanoyl-CoA + H2O = hexadecanoate + CoA + H(+). The enzyme catalyses dodecanoyl-CoA + H2O = dodecanoate + CoA + H(+). It catalyses the reaction tetradecanoyl-CoA + H2O = tetradecanoate + CoA + H(+). The catalysed reaction is octadecanoyl-CoA + H2O = octadecanoate + CoA + H(+). It carries out the reaction a beta-lactam + H2O = a substituted beta-amino acid. With respect to regulation, beta-lactamase activity is inhibited by sulbactam. In terms of biological role, acyl-CoA thioesterases are a group of enzymes that catalyze the hydrolysis of acyl-CoAs to the free fatty acid and coenzyme A (CoASH), providing the potential to regulate intracellular levels of acyl-CoAs, free fatty acids and CoASH. Has an acyl-CoA thioesterase activity towards the long chain fatty acyl-CoA thioester palmitoyl-CoA (hexadecanoyl-CoA; C16:0-CoA). Displays a substrate preference for fatty acyl-CoAs with chain-lengths C12-C18. Possesses beta-lactamase activity, catalyzing the hydrolysis of penicillin G and nitrocefin. Exhibits no activity towards other beta-lactam antibiotic classes including cephalosporins (cefotaxime) and carbapenems (imipenem). The polypeptide is Acyl-coenzyme A thioesterase MBLAC2 (MBLAC2) (Homo sapiens (Human)).